We begin with the raw amino-acid sequence, 127 residues long: Small ribosomal subunit protein uS11 (127 aa).

The protein belongs to the universal ribosomal protein uS11 family. In terms of assembly, part of the 30S ribosomal subunit. Interacts with proteins S7 and S18. Binds to IF-3.

Its function is as follows. Located on the platform of the 30S subunit, it bridges several disparate RNA helices of the 16S rRNA. Forms part of the Shine-Dalgarno cleft in the 70S ribosome. This chain is Small ribosomal subunit protein uS11, found in Streptococcus pyogenes serotype M49 (strain NZ131).